A 222-amino-acid polypeptide reads, in one-letter code: uncharacterized protein (222 aa).

7 consecutive transmembrane segments (helical) span residues 26–46 (YGLL…SQQM), 48–68 (LPYP…FLTV), 75–95 (WGLV…GPIL), 107–127 (VITS…AYVL), 139–159 (FITA…FFQI), 166–186 (ISAG…SAII), and 198–218 (ISLY…FGIA).

The protein belongs to the BI1 family.

It localises to the cell membrane. This is an uncharacterized protein from Pseudomonas aeruginosa (strain ATCC 15692 / DSM 22644 / CIP 104116 / JCM 14847 / LMG 12228 / 1C / PRS 101 / PAO1).